The sequence spans 124 residues: Fluoride-specific ion channel FluC (124 aa).

The next 4 helical transmembrane spans lie at 4 to 24 (LLLV…ISIF), 35 to 55 (FGTL…YALG), 60 to 80 (ISPE…TTFS), and 102 to 122 (VVLN…LVFS). 2 residues coordinate Na(+): Gly-74 and Thr-77.

The protein belongs to the fluoride channel Fluc/FEX (TC 1.A.43) family.

The protein resides in the cell inner membrane. The catalysed reaction is fluoride(in) = fluoride(out). Its activity is regulated as follows. Na(+) is not transported, but it plays an essential structural role and its presence is essential for fluoride channel function. In terms of biological role, fluoride-specific ion channel. Important for reducing fluoride concentration in the cell, thus reducing its toxicity. This chain is Fluoride-specific ion channel FluC, found in Shewanella baltica (strain OS185).